A 121-amino-acid polypeptide reads, in one-letter code: Methylglyoxal synthase (121 aa).

In terms of domain architecture, MGS-like spans 1-121 (MMKVALIAHD…SAELFLRALN (121 aa)). Substrate-binding positions include His-9, Lys-13, 35-38 (TGTT), and 55-56 (SG). Residue Asp-61 is the Proton donor/acceptor of the active site. His-88 is a binding site for substrate.

It belongs to the methylglyoxal synthase family.

It carries out the reaction dihydroxyacetone phosphate = methylglyoxal + phosphate. Functionally, catalyzes the formation of methylglyoxal from dihydroxyacetone phosphate. The chain is Methylglyoxal synthase from Carboxydothermus hydrogenoformans (strain ATCC BAA-161 / DSM 6008 / Z-2901).